Reading from the N-terminus, the 652-residue chain is Acetyl-coenzyme A synthetase (652 aa).

CoA-binding positions include 189–192 and Thr311; that span reads RGGK. ATP contacts are provided by residues 387–389, 411–416, Asp500, and Arg515; these read GEP and DTWWQT. Residue Ser523 coordinates CoA. Arg526 contacts ATP. 3 residues coordinate Mg(2+): Val537, His539, and Val542. Arg584 contributes to the CoA binding site. Residue Lys609 is modified to N6-acetyllysine.

Belongs to the ATP-dependent AMP-binding enzyme family. Mg(2+) is required as a cofactor. Acetylated. Deacetylation by the SIR2-homolog deacetylase activates the enzyme.

The catalysed reaction is acetate + ATP + CoA = acetyl-CoA + AMP + diphosphate. In terms of biological role, catalyzes the conversion of acetate into acetyl-CoA (AcCoA), an essential intermediate at the junction of anabolic and catabolic pathways. AcsA undergoes a two-step reaction. In the first half reaction, AcsA combines acetate with ATP to form acetyl-adenylate (AcAMP) intermediate. In the second half reaction, it can then transfer the acetyl group from AcAMP to the sulfhydryl group of CoA, forming the product AcCoA. This is Acetyl-coenzyme A synthetase from Bartonella henselae (strain ATCC 49882 / DSM 28221 / CCUG 30454 / Houston 1) (Rochalimaea henselae).